A 163-amino-acid chain; its full sequence is Nucleotide-binding protein cbdbA1256 (163 aa).

This sequence belongs to the YajQ family.

Nucleotide-binding protein. This chain is Nucleotide-binding protein cbdbA1256, found in Dehalococcoides mccartyi (strain CBDB1).